The sequence spans 161 residues: 6,7-dimethyl-8-ribityllumazine synthase (161 aa).

5-amino-6-(D-ribitylamino)uracil-binding positions include Trp26, Ala58–Glu60, and Val81–Ile83. Position 86–87 (Gly86–Thr87) interacts with (2S)-2-hydroxy-3-oxobutyl phosphate. The active-site Proton donor is the His89. Phe114 provides a ligand contact to 5-amino-6-(D-ribitylamino)uracil. Arg128 is a binding site for (2S)-2-hydroxy-3-oxobutyl phosphate.

The protein belongs to the DMRL synthase family.

It carries out the reaction (2S)-2-hydroxy-3-oxobutyl phosphate + 5-amino-6-(D-ribitylamino)uracil = 6,7-dimethyl-8-(1-D-ribityl)lumazine + phosphate + 2 H2O + H(+). It participates in cofactor biosynthesis; riboflavin biosynthesis; riboflavin from 2-hydroxy-3-oxobutyl phosphate and 5-amino-6-(D-ribitylamino)uracil: step 1/2. In terms of biological role, catalyzes the formation of 6,7-dimethyl-8-ribityllumazine by condensation of 5-amino-6-(D-ribitylamino)uracil with 3,4-dihydroxy-2-butanone 4-phosphate. This is the penultimate step in the biosynthesis of riboflavin. The polypeptide is 6,7-dimethyl-8-ribityllumazine synthase (Nocardioides sp. (strain ATCC BAA-499 / JS614)).